Here is a 777-residue protein sequence, read N- to C-terminus: DNA repair helicase/translocase XPB-R (777 aa).

The Helicase ATP-binding domain occupies 212–416 (AASDGALRSG…DLFHLVGPKL (205 aa)). 225–232 (LPCGSGKT) provides a ligand contact to ATP. The DEVH box motif lies at 369–372 (DEVH). The Helicase C-terminal domain maps to 484 to 631 (IVKRHVAESS…GYTCSVTEFN (148 aa)).

This sequence belongs to the helicase family. RAD25/XPB subfamily.

It catalyses the reaction Couples ATP hydrolysis with the unwinding of duplex DNA by translocating in the 3'-5' direction.. The catalysed reaction is ATP + H2O = ADP + phosphate + H(+). ATP-dependent 3'-5' DNA helicase/translocase; binds dsDNA rather than ssDNA, unzipping it in a translocase rather than classical helicase activity. Involved in nucleotide excision repair (NER) of damaged DNA. XPB-R is a paralog of XBP, but is not a component of the TFIIH basal transcription factor and is dispensable for RNA polymerase II transcription. The polypeptide is DNA repair helicase/translocase XPB-R (Trypanosoma brucei brucei (strain 927/4 GUTat10.1)).